Consider the following 352-residue polypeptide: MALRKCGNLFVARLAGTSTRAASTMTVRDALNQAMDEEIKRDDRVFLMGEEVAQYDGAYKISKGLWKKHGDKRVVDTPITEMGFAGIAVGAAFAGLRPICEFMTFNFSMQAIDQIINSAAKTYYMSAGRVPVPIVFRGPNGAAAGVAAQHSQDFSAWYAHCPGLKVVCPYSAEDAKGLLKAAIRDDNPVVFLENEILYGQSFPVGDEVLSDDFVVPIGKAKIERAGDHVTIVSYSRGVEFSLEAAKQLEAIGVSAEVINLRSLRPFDFESIRQSVHKTHHLVSVETGWPFAGIGSEIAAQVMESDVFDQLDAPLLRVTGVDVPMPYTQTLEAAALPTAEHVVKAVKKSLNIA.

The N-terminal 21 residues, 1-21, are a transit peptide targeting the mitochondrion; sequence MALRKCGNLFVARLAGTSTRA. Residue glutamate 81 participates in thiamine diphosphate binding. K(+) is bound by residues isoleucine 134, alanine 182, isoleucine 183, aspartate 185, and asparagine 187.

As to quaternary structure, tetramer of 2 alpha and 2 beta subunits. It depends on thiamine diphosphate as a cofactor.

It localises to the mitochondrion matrix. The enzyme catalyses N(6)-[(R)-lipoyl]-L-lysyl-[protein] + pyruvate + H(+) = N(6)-[(R)-S(8)-acetyldihydrolipoyl]-L-lysyl-[protein] + CO2. Its function is as follows. The pyruvate dehydrogenase complex catalyzes the overall conversion of pyruvate to acetyl-CoA and CO(2). It contains multiple copies of three enzymatic components: pyruvate dehydrogenase (E1), dihydrolipoamide acetyltransferase (E2) and lipoamide dehydrogenase (E3). This Caenorhabditis elegans protein is Pyruvate dehydrogenase E1 component subunit beta, mitochondrial (pdhb-1).